The sequence spans 44 residues: uncharacterized protein (44 aa).

This is an uncharacterized protein from Caenorhabditis elegans.